The following is a 675-amino-acid chain: Protein PALS1 (675 aa).

The interval Met-1 to Glu-78 is disordered. The required for the correct localization of PALS1 and PATJ at cell-cell contacts and the normal formation of tight junctions and adherens junctions stretch occupies residues Met-1–Glu-345. Composition is skewed to basic and acidic residues over residues Val-10–Ala-36 and Ala-54–Glu-78. Residues Ser-14 and Ser-25 each carry the phosphoserine modification. Positions Val-21–Asp-140 are interaction with PARD6B. A phosphoserine mark is found at Ser-83 and Ser-84. 2 L27 domains span residues Lys-120–Ser-177 and Pro-179–Glu-235. Residues Pro-181–Tyr-243 are interaction with LIN7C. The region spanning Ile-256–Gln-336 is the PDZ domain. Positions Glu-345–Glu-417 constitute an SH3 domain. Residues Lys-479 to Asn-660 enclose the Guanylate kinase-like domain. Gly-486 to Asn-493 lines the ATP pocket.

It belongs to the MAGUK family. As to quaternary structure, heterodimer with MPP1. Forms a heterotrimeric complex composed of PALS1, LIN7B and PATJ; the N-terminal L27 domain of PALS1 interacts with the L27 domain of PATJ and the C-terminal L27 domain of PALS1 interacts with the L27 domain of LIN7B. Component of a complex composed of PALS1, CRB1 and MPP4. Component of a complex whose core is composed of ARHGAP17, AMOT, PALS1, PATJ and PARD3/PAR3. Component of a complex composed of PALS1, CRB1 and EPB41L5. Within the complex, interacts (via HOOK domain) with EPB41L5 (via FERM domain), and interacts with CRB1 (via intracellular domain). Component of a complex composed of PALS1, MPP3 and CRB1; PALS1 acts as a bridging protein between MPP3 (via guanylate kinase-like domain) and CRB1. Component of a complex composed of CRB3, PALS1 and PATJ. As part of the Crumbs complex; interacts with WWP1, the interaction is enhanced by AMOTL2 and facilitates WWP1 localization to the plasma membrane. The Crumbs complex promotes monoubiquitination of AMOTL2 by WWP1, which activates the Hippo signaling pathway. Interacts (via PDZ domain) with PATJ (via N-terminus). Interacts with EZR. Interacts (via PDZ domain) with CRB1 (via C-terminal ERLI motif). While the PDZ domain is sufficient for interaction with CRB1, the adjacent SH3 and guanylate kinase-like domains are likely to contribute to a high affinity interaction. Interacts with WWTR1/TAZ (via WW domain). Interacts with MPP7. Interacts (via PDZ domain) with CRB3 (via C-terminus). Interacts with LIN7C. Interacts with MPDZ. Interacts with PARD6B. Interacts with SC6A1. Interacts with CDH5; the interaction promotes PALS1 localization to cell junctions and is required for CDH5-mediated vascular lumen formation and endothelial cell. Interacts with NPHP1 (via coiled coil and SH3 domains). Interacts with NPHP4. Interacts with CRB2.

It localises to the golgi apparatus. It is found in the cell membrane. Its subcellular location is the endomembrane system. The protein localises to the cell junction. The protein resides in the tight junction. It localises to the adherens junction. It is found in the cell projection. Its subcellular location is the axon. The protein localises to the perikaryon. The protein resides in the apical cell membrane. In terms of biological role, plays a role in tight junction biogenesis and in the establishment of cell polarity in epithelial cells. Also involved in adherens junction biogenesis by ensuring correct localization of the exocyst complex protein EXOC4/SEC8 which allows trafficking of adherens junction structural component CDH1 to the cell surface. Plays a role through its interaction with CDH5 in vascular lumen formation and endothelial membrane polarity. Required during embryonic and postnatal retinal development. Required for the maintenance of cerebellar progenitor cells in an undifferentiated proliferative state, preventing premature differentiation, and is required for cerebellar histogenesis, fissure formation, cerebellar layer organization and cortical development. Plays a role in neuronal progenitor cell survival, potentially via promotion of mTOR signaling. Plays a role in the radial and longitudinal extension of the myelin sheath in Schwann cells. May modulate SC6A1/GAT1-mediated GABA uptake by stabilizing the transporter. May play a role in the T-cell receptor-mediated activation of NF-kappa-B. Required for localization of EZR to the apical membrane of parietal cells and may play a role in the dynamic remodeling of the apical cytoskeleton. Required for the normal polarized localization of the vesicular marker STX4. Required for the correct trafficking of the myelin proteins PMP22 and MAG. Involved in promoting phosphorylation and cytoplasmic retention of transcriptional coactivators YAP1 and WWTR1/TAZ which leads to suppression of TGFB1-dependent transcription of target genes such as CCN2/CTGF, SERPINE1/PAI1, SNAI1/SNAIL1 and SMAD7. This chain is Protein PALS1, found in Canis lupus familiaris (Dog).